Consider the following 162-residue polypeptide: Phosphopantetheine adenylyltransferase (162 aa).

A substrate-binding site is contributed by Ser9. ATP is bound by residues 9 to 10 and His17; that span reads SF. Substrate is bound by residues Lys41, Thr73, and Arg87. ATP-binding positions include 88-90, Glu98, and 123-129; these read GLR and YSFISSS.

It belongs to the bacterial CoaD family. In terms of assembly, homohexamer. Mg(2+) is required as a cofactor.

The protein localises to the cytoplasm. The catalysed reaction is (R)-4'-phosphopantetheine + ATP + H(+) = 3'-dephospho-CoA + diphosphate. It participates in cofactor biosynthesis; coenzyme A biosynthesis; CoA from (R)-pantothenate: step 4/5. Reversibly transfers an adenylyl group from ATP to 4'-phosphopantetheine, yielding dephospho-CoA (dPCoA) and pyrophosphate. The chain is Phosphopantetheine adenylyltransferase from Carboxydothermus hydrogenoformans (strain ATCC BAA-161 / DSM 6008 / Z-2901).